Here is an 82-residue protein sequence, read N- to C-terminus: Large ribosomal subunit protein bL27 (82 aa).

Positions 1-54 (MAHKKGQGASRNGRDSESKRLGMKVGAGQRVSTGSILVRQRGTKWHPSQNVGRG) are disordered.

This sequence belongs to the bacterial ribosomal protein bL27 family.

This Chlamydia caviae (strain ATCC VR-813 / DSM 19441 / 03DC25 / GPIC) (Chlamydophila caviae) protein is Large ribosomal subunit protein bL27.